The chain runs to 272 residues: HMP-PP phosphatase (272 aa).

The active-site Nucleophile is the aspartate 8. Mg(2+) contacts are provided by aspartate 8, aspartate 10, and aspartate 212.

Belongs to the HAD-like hydrolase superfamily. Cof family. The cofactor is Mg(2+).

It carries out the reaction 4-amino-2-methyl-5-(diphosphooxymethyl)pyrimidine + H2O = 4-amino-2-methyl-5-(phosphooxymethyl)pyrimidine + phosphate + H(+). Its function is as follows. Catalyzes the hydrolysis of 4-amino-2-methyl-5-hydroxymethylpyrimidine pyrophosphate (HMP-PP) to 4-amino-2-methyl-5-hydroxymethylpyrimidine phosphate (HMP-P). The sequence is that of HMP-PP phosphatase from Escherichia fergusonii (strain ATCC 35469 / DSM 13698 / CCUG 18766 / IAM 14443 / JCM 21226 / LMG 7866 / NBRC 102419 / NCTC 12128 / CDC 0568-73).